The sequence spans 503 residues: Probable cytosol aminopeptidase (503 aa).

Residues Lys270 and Asp275 each contribute to the Mn(2+) site. The active site involves Lys282. Mn(2+)-binding residues include Asp293, Asp352, and Glu354. Arg356 is a catalytic residue.

It belongs to the peptidase M17 family. It depends on Mn(2+) as a cofactor.

The protein localises to the cytoplasm. It carries out the reaction Release of an N-terminal amino acid, Xaa-|-Yaa-, in which Xaa is preferably Leu, but may be other amino acids including Pro although not Arg or Lys, and Yaa may be Pro. Amino acid amides and methyl esters are also readily hydrolyzed, but rates on arylamides are exceedingly low.. It catalyses the reaction Release of an N-terminal amino acid, preferentially leucine, but not glutamic or aspartic acids.. Its function is as follows. Presumably involved in the processing and regular turnover of intracellular proteins. Catalyzes the removal of unsubstituted N-terminal amino acids from various peptides. The chain is Probable cytosol aminopeptidase from Shigella flexneri.